The sequence spans 133 residues: Small ribosomal subunit protein uS11 (133 aa).

Belongs to the universal ribosomal protein uS11 family. Part of the 30S ribosomal subunit. Interacts with proteins S7 and S18. Binds to IF-3.

Its function is as follows. Located on the platform of the 30S subunit, it bridges several disparate RNA helices of the 16S rRNA. Forms part of the Shine-Dalgarno cleft in the 70S ribosome. The sequence is that of Small ribosomal subunit protein uS11 from Ralstonia pickettii (strain 12J).